Here is an 874-residue protein sequence, read N- to C-terminus: Probable inorganic carbon transporter subunit DabA (874 aa).

Cys-398, Asp-400, His-580, and Cys-595 together coordinate Zn(2+).

This sequence belongs to the inorganic carbon transporter (TC 9.A.2) DabA family. In terms of assembly, forms a complex with DabB. Zn(2+) serves as cofactor.

The protein resides in the cell membrane. Functionally, part of an energy-coupled inorganic carbon pump. The sequence is that of Probable inorganic carbon transporter subunit DabA from Bacillus anthracis (strain A0248).